The chain runs to 37 residues: Potassium channel toxin alpha-KTx 1.13 (37 aa).

At Gln-1 the chain carries Pyrrolidone carboxylic acid. 3 cysteine pairs are disulfide-bonded: Cys-7-Cys-28, Cys-13-Cys-33, and Cys-17-Cys-35. Positions 26-33 are interaction with Ca(2+)-activated K(+) channels; it reads GKCMNKKC.

This sequence belongs to the short scorpion toxin superfamily. Potassium channel inhibitor family. Alpha-KTx 01 subfamily. As to expression, expressed by the venom gland.

Its subcellular location is the secreted. In terms of biological role, potent selective inhibitor of high conductance (maxi-K), different medium and small conductance calcium-activated potassium channels (KCa1.1/KCNMA1 and others), as well as a voltage-dependent potassium channel (Kv1.3/KCNA3&gt;Kv1.2/KCNA2&gt;Kv1.6/KCNA3&gt;&gt;Shaker/Sh). It blocks channel activity by a simple bimolecular inhibition process. Its function is as follows. Has a pH-specific antimicrobial activity against bacteria (B.subtilis, E.coli and S.aureus) and the fungus C.albicans. The sequence is that of Potassium channel toxin alpha-KTx 1.13 from Leiurus hebraeus (Hebrew deathstalker scorpion).